The following is a 205-amino-acid chain: Imidazole glycerol phosphate synthase subunit HisH (205 aa).

Positions 1-205 (MIALVDYGGG…FFKMALGDKK (205 aa)) constitute a Glutamine amidotransferase type-1 domain. Residue Cys79 is the Nucleophile of the active site. Residues His181 and Glu183 contribute to the active site.

In terms of assembly, heterodimer of HisH and HisF.

The protein localises to the cytoplasm. It catalyses the reaction 5-[(5-phospho-1-deoxy-D-ribulos-1-ylimino)methylamino]-1-(5-phospho-beta-D-ribosyl)imidazole-4-carboxamide + L-glutamine = D-erythro-1-(imidazol-4-yl)glycerol 3-phosphate + 5-amino-1-(5-phospho-beta-D-ribosyl)imidazole-4-carboxamide + L-glutamate + H(+). The catalysed reaction is L-glutamine + H2O = L-glutamate + NH4(+). Its pathway is amino-acid biosynthesis; L-histidine biosynthesis; L-histidine from 5-phospho-alpha-D-ribose 1-diphosphate: step 5/9. In terms of biological role, IGPS catalyzes the conversion of PRFAR and glutamine to IGP, AICAR and glutamate. The HisH subunit catalyzes the hydrolysis of glutamine to glutamate and ammonia as part of the synthesis of IGP and AICAR. The resulting ammonia molecule is channeled to the active site of HisF. The polypeptide is Imidazole glycerol phosphate synthase subunit HisH (Dehalococcoides mccartyi (strain CBDB1)).